The sequence spans 477 residues: Solute carrier family 2, facilitated glucose transporter member 8 (477 aa).

Over 1–25 (MSPEDPQETQPLLRPPEARTPRGRR) the chain is Cytoplasmic. The Dileucine internalization motif motif lies at 12–13 (LL). The chain crosses the membrane as a helical span at residues 26–46 (VFLASFAAALGPLSFGFALGY). The Extracellular segment spans residues 47–70 (SSPAIPSLRRTAPPALRLGDNAAS). The helical transmembrane segment at 71–91 (WFGAVVTLGAAAGGILGGWLL) threads the bilayer. The Cytoplasmic segment spans residues 92–96 (DRAGR). The chain crosses the membrane as a helical span at residues 97–117 (KLSLLLCTVPFVTGFAVITAA). Over 118 to 127 (RDVWMLLGGR) the chain is Extracellular. A helical transmembrane segment spans residues 128–148 (LLTGLACGVASLVAPVYISEI). The Cytoplasmic portion of the chain corresponds to 149-156 (AYPAVRGL). The helical transmembrane segment at 157-177 (LGSCVQLMVVTGILLAYVAGW) threads the bilayer. Gln-162 lines the D-glucose pocket. The Extracellular segment spans residues 178–182 (VLEWR). A helical transmembrane segment spans residues 183–203 (WLAVLGCVPPTLMLLLMCYMP). At 204-257 (ETPRFLLTQHQYQEAMAALRFLWGSEEGWEEPPVGAEHQGFQLALLRRPGIYKP) the chain is on the cytoplasmic side. A helical transmembrane segment spans residues 258–278 (LIIGISLMVFQQLSGVNAIMF). D-glucose-binding positions include 268–269 (QQ) and Asn-274. Residues 279–293 (YANSIFEEAKFKDSS) lie on the Extracellular side of the membrane. A helical transmembrane segment spans residues 294–314 (LASVTVGIIQVLFTAVAALIM). Residues 315-320 (DRAGRR) lie on the Cytoplasmic side of the membrane. Residues 321–341 (LLLALSGVIMVFSMSAFGTYF) traverse the membrane as a helical segment. Residues 342 to 367 (KLTQSLPSNSSHVGLVPIAAEPVDVQ) are Extracellular-facing. A glycan (N-linked (GlcNAc...) asparagine) is linked at Asn-350. The helical transmembrane segment at 368–388 (VGLAWLAVGSMCLFIAGFAVG) threads the bilayer. Residues 389–404 (WGPIPWLLMSEIFPLH) are Cytoplasmic-facing. Position 394 (Trp-394) interacts with D-glucose. A helical transmembrane segment spans residues 405–425 (VKGVATGICVLTNWFMAFLVT). Topologically, residues 426–438 (KEFSSVMEMLRPY) are extracellular. The helical transmembrane segment at 439–459 (GAFWLTAAFCALSVLFTLTVV) threads the bilayer. Residues 460–477 (PETKGRTLEQVTAHFEGR) are Cytoplasmic-facing.

This sequence belongs to the major facilitator superfamily. Sugar transporter (TC 2.A.1.1) family. Glucose transporter subfamily. Interacts with AP2B1. Also able to mediate the transport of dehydroascorbate. Highest level of expression in placenta and testis. Highly expressed in adult and pubertal testis, but not prepubertal testis. Lower levels of expression in brain, liver, heart, kidney, fat and skeletal muscle.

The protein localises to the cell membrane. Its subcellular location is the cytoplasmic vesicle membrane. The catalysed reaction is D-glucose(out) = D-glucose(in). It catalyses the reaction D-fructose(out) = D-fructose(in). The enzyme catalyses L-dehydroascorbate(out) = L-dehydroascorbate(in). It carries out the reaction alpha,alpha-trehalose(in) = alpha,alpha-trehalose(out). Inhibited by cytochalasin B. Its function is as follows. Insulin-regulated facilitative hexose transporter that mediates the transport of glucose and fructose. Facilitates hepatic influx of dietary trehalose, which in turn inhibits glucose and fructose influx triggering a starvation signal and hepatic autophagy through activation of AMPK and ULK1. Also able to mediate the transport of dehydroascorbate. This is Solute carrier family 2, facilitated glucose transporter member 8 from Mus musculus (Mouse).